Here is an 883-residue protein sequence, read N- to C-terminus: HTH-type transcriptional regulator AlkS (883 aa).

The 66-residue stretch at 816–881 folds into the HTH luxR-type domain; that stretch reads ENKAGDFLTL…QAIIEAERQG (66 aa). The H-T-H motif DNA-binding region spans 840-859; sequence NKQIATKMYVTEDAIKWHMR.

The protein operates within hydrocarbon metabolism; alkane degradation. In terms of biological role, may act as a transcriptional regulator of AlkB. This is HTH-type transcriptional regulator AlkS (alkS) from Pseudomonas putida (Arthrobacter siderocapsulatus).